The sequence spans 194 residues: Naphthalene 1,2-dioxygenase system, small oxygenase component (194 aa).

Belongs to the bacterial ring-hydroxylating dioxygenase beta subunit family. As to quaternary structure, the naphthalene dioxygenase (NDO) multicomponent enzyme system is composed of an electron transfer component and a dioxygenase component (iron sulfur protein (ISP)). The electron transfer component is composed of a ferredoxin reductase (NagAa) and a ferredoxin (NagAb), and the dioxygenase component is formed by a large alpha subunit (NagAc) and a small beta subunit (NagAd).

Its pathway is aromatic compound metabolism; naphthalene degradation. In terms of biological role, component of the naphthalene dioxygenase (NDO) multicomponent enzyme system which catalyzes the incorporation of both atoms of molecular oxygen into naphthalene to form cis-(1R,2S)-dihydroxy-1,2-dihydronaphthalene. Also able to use styrene as substrate. The beta subunit seems to have a structural role in the holoenzyme. In Ralstonia sp, this protein is Naphthalene 1,2-dioxygenase system, small oxygenase component.